Consider the following 466-residue polypeptide: Soluble pyridine nucleotide transhydrogenase (466 aa).

36-45 (ERYQNVGGGC) is a binding site for FAD.

This sequence belongs to the class-I pyridine nucleotide-disulfide oxidoreductase family. Homooligomer; probable homooctamer. FAD is required as a cofactor.

It is found in the cytoplasm. It catalyses the reaction NAD(+) + NADPH = NADH + NADP(+). In terms of biological role, conversion of NADPH, generated by peripheral catabolic pathways, to NADH, which can enter the respiratory chain for energy generation. In Escherichia coli O6:H1 (strain CFT073 / ATCC 700928 / UPEC), this protein is Soluble pyridine nucleotide transhydrogenase.